Consider the following 151-residue polypeptide: Ribonuclease H (151 aa).

Residues 2–143 form the RNase H type-1 domain; the sequence is SDDWVEIYTD…ADLLANRGVV (142 aa). Residues Asp-11, Glu-49, Asp-71, and Asp-135 each contribute to the Mg(2+) site.

Belongs to the RNase H family. As to quaternary structure, monomer. Mg(2+) serves as cofactor.

Its subcellular location is the cytoplasm. The enzyme catalyses Endonucleolytic cleavage to 5'-phosphomonoester.. Its function is as follows. Endonuclease that specifically degrades the RNA of RNA-DNA hybrids. This chain is Ribonuclease H, found in Stutzerimonas stutzeri (strain A1501) (Pseudomonas stutzeri).